The chain runs to 325 residues: Lipid droplet-associated hydrolase (325 aa).

Residue S139 is the Nucleophile of the active site. Active-site charge relay system residues include D271 and H300.

The protein belongs to the AB hydrolase superfamily. LDAH family. In terms of tissue distribution, present in macrophage-rich areas in atherosclerotic lesions (at protein level). Expressed in monocytes and monocyte-derived macrophages (at protein level).

Its subcellular location is the lipid droplet. It localises to the endoplasmic reticulum. The catalysed reaction is a cholesterol ester + H2O = cholesterol + a fatty acid + H(+). In terms of biological role, probable serine lipid hydrolase associated with lipid droplets. Has low cholesterol esterase activity. Appears to lack triglyceride lipase activity. Involved in cholesterol and triglyceride homeostasis; has opposing effects, stimulating cellular triglyceride accumulation and cellular cholesterol release. Acts antagonistically with PNPLA2/ATGL in regulation of cellular lipid stores. May regulate triglyceride accumulation indirectly through stimulation of PNPLA2/ATGL ubiquitination and proteasomal degradation. Promotes microtubule-dependent lipid droplet fusion. Highly expressed in macrophage-rich areas in atherosclerotic lesions, suggesting that it could promote cholesterol ester turnover in macrophages. The polypeptide is Lipid droplet-associated hydrolase (Homo sapiens (Human)).